We begin with the raw amino-acid sequence, 285 residues long: Glutamate racemase (285 aa).

Residues D28–S29 and Y60–G61 each bind substrate. Catalysis depends on C92, which acts as the Proton donor/acceptor. N93–T94 is a substrate binding site. Catalysis depends on C204, which acts as the Proton donor/acceptor. T205 to H206 is a substrate binding site.

This sequence belongs to the aspartate/glutamate racemases family.

The catalysed reaction is L-glutamate = D-glutamate. The protein operates within cell wall biogenesis; peptidoglycan biosynthesis. Its function is as follows. Provides the (R)-glutamate required for cell wall biosynthesis. The polypeptide is Glutamate racemase (Shigella flexneri serotype 5b (strain 8401)).